A 413-amino-acid chain; its full sequence is Tyrosine--tRNA ligase (413 aa).

A 'HIGH' region motif is present at residues 57–66 (PTAPDIHLGH). The 'KMSKS' region signature appears at 241 to 245 (KMSKS). An ATP-binding site is contributed by K244. The region spanning 351–412 (VWLPRLMVQA…GKRKFARLHT (62 aa)) is the S4 RNA-binding domain.

This sequence belongs to the class-I aminoacyl-tRNA synthetase family. TyrS type 2 subfamily. Homodimer.

Its subcellular location is the cytoplasm. The enzyme catalyses tRNA(Tyr) + L-tyrosine + ATP = L-tyrosyl-tRNA(Tyr) + AMP + diphosphate + H(+). Its function is as follows. Catalyzes the attachment of tyrosine to tRNA(Tyr) in a two-step reaction: tyrosine is first activated by ATP to form Tyr-AMP and then transferred to the acceptor end of tRNA(Tyr). The sequence is that of Tyrosine--tRNA ligase from Moorella thermoacetica (strain ATCC 39073 / JCM 9320).